The sequence spans 943 residues: UvrABC system protein A (943 aa).

ATP is bound at residue Gly-32–Ser-39. A C4-type zinc finger spans residues Cys-251–Cys-278. 2 ABC transporter domains span residues Trp-308–Ile-589 and Gly-609–Lys-937. ATP is bound at residue Gly-641–Ser-648. Residues Cys-740–Cys-766 form a C4-type zinc finger.

It belongs to the ABC transporter superfamily. UvrA family. Forms a heterotetramer with UvrB during the search for lesions.

The protein resides in the cytoplasm. In terms of biological role, the UvrABC repair system catalyzes the recognition and processing of DNA lesions. UvrA is an ATPase and a DNA-binding protein. A damage recognition complex composed of 2 UvrA and 2 UvrB subunits scans DNA for abnormalities. When the presence of a lesion has been verified by UvrB, the UvrA molecules dissociate. The chain is UvrABC system protein A from Streptococcus pneumoniae serotype 4 (strain ATCC BAA-334 / TIGR4).